We begin with the raw amino-acid sequence, 481 residues long: Cardiolipin synthase A (481 aa).

2 helical membrane passes run 10–30 (FFGY…LHAL) and 40–60 (IAWA…YLIF). PLD phosphodiesterase domains follow at residues 220-247 (VNFR…GDEY) and 394-421 (QPGF…DNRS). Active-site residues include His-225, Lys-227, Asp-232, His-399, Lys-401, and Asp-406.

The protein belongs to the phospholipase D family. Cardiolipin synthase subfamily. ClsA sub-subfamily.

It is found in the cell inner membrane. The enzyme catalyses 2 a 1,2-diacyl-sn-glycero-3-phospho-(1'-sn-glycerol) = a cardiolipin + glycerol. Its function is as follows. Catalyzes the reversible phosphatidyl group transfer from one phosphatidylglycerol molecule to another to form cardiolipin (CL) (diphosphatidylglycerol) and glycerol. The chain is Cardiolipin synthase A from Pseudomonas putida (Arthrobacter siderocapsulatus).